The primary structure comprises 692 residues: Highly divergent homeobox (692 aa).

Residues Leu3–Ser63 constitute a DNA-binding region (homeobox 1). Polar residues predominate over residues Ser117 to Thr133. Residues Ser117 to His136 form a disordered region. Glycyl lysine isopeptide (Lys-Gly) (interchain with G-Cter in SUMO2) cross-links involve residues Lys137, Lys142, Lys146, Lys165, Lys174, Lys196, Lys214, Lys223, and Lys234. The segment at residues Ala437–Gly500 is a DNA-binding region (homeobox 2). 2 disordered regions span residues Pro505–Arg541 and Lys647–Leu692. Over residues Thr676–Leu692 the composition is skewed to polar residues.

Its subcellular location is the nucleus. In Mus musculus (Mouse), this protein is Highly divergent homeobox (Hdx).